Reading from the N-terminus, the 78-residue chain is Delta-conotoxin-like TxMKLT1-0111 (78 aa).

The first 22 residues, Met-1–Ala-22, serve as a signal peptide directing secretion. Positions Asp-23 to Asn-49 are excised as a propeptide. Disulfide bonds link Cys-53/Cys-68, Cys-60/Cys-72, and Cys-67/Cys-77.

This sequence belongs to the conotoxin O1 superfamily. Expressed by the venom duct.

It is found in the secreted. In terms of biological role, delta-conotoxins bind to site 6 of voltage-gated sodium channels (Nav) and inhibit the inactivation process. The sequence is that of Delta-conotoxin-like TxMKLT1-0111 from Conus textile (Cloth-of-gold cone).